Consider the following 132-residue polypeptide: NADPH-dependent 7-cyano-7-deazaguanine reductase (132 aa).

Cys-48 functions as the Thioimide intermediate in the catalytic mechanism. The active-site Proton donor is Asp-55. Residues 70-72 (LEL) and 89-90 (ME) each bind substrate.

Belongs to the GTP cyclohydrolase I family. QueF type 1 subfamily.

It is found in the cytoplasm. It catalyses the reaction 7-aminomethyl-7-carbaguanine + 2 NADP(+) = 7-cyano-7-deazaguanine + 2 NADPH + 3 H(+). It functions in the pathway tRNA modification; tRNA-queuosine biosynthesis. Catalyzes the NADPH-dependent reduction of 7-cyano-7-deazaguanine (preQ0) to 7-aminomethyl-7-deazaguanine (preQ1). The sequence is that of NADPH-dependent 7-cyano-7-deazaguanine reductase from Elusimicrobium minutum (strain Pei191).